We begin with the raw amino-acid sequence, 553 residues long: Putative transport protein YidE (553 aa).

5 consecutive transmembrane segments (helical) span residues 4-24, 28-48, 65-85, 95-115, and 158-178; these read IALT…IGNV, GIGL…HFVS, FGLI…FFAS, LFAV…HKLF, and MSYA…MWML. RCK C-terminal domains follow at residues 191–276 and 279–361; these read QQHE…VIGQ and DTSL…VLGN. 6 consecutive transmembrane segments (helical) span residues 371–391, 393–413, 439–459, 464–484, 493–513, and 533–553; these read MLPV…PVFV, GFPA…ALIL, IVLF…NTLV, LSWI…VGIL, YLTM…LAFA, and LVMF…WSIG.

Belongs to the AAE transporter (TC 2.A.81) family. YidE subfamily.

It localises to the cell membrane. In Escherichia coli (strain ATCC 8739 / DSM 1576 / NBRC 3972 / NCIMB 8545 / WDCM 00012 / Crooks), this protein is Putative transport protein YidE.